The sequence spans 222 residues: Protein-L-isoaspartate O-methyltransferase (222 aa).

S65 is a catalytic residue.

The protein belongs to the methyltransferase superfamily. L-isoaspartyl/D-aspartyl protein methyltransferase family.

It localises to the cytoplasm. The enzyme catalyses [protein]-L-isoaspartate + S-adenosyl-L-methionine = [protein]-L-isoaspartate alpha-methyl ester + S-adenosyl-L-homocysteine. Its function is as follows. Catalyzes the methyl esterification of L-isoaspartyl residues in peptides and proteins that result from spontaneous decomposition of normal L-aspartyl and L-asparaginyl residues. It plays a role in the repair and/or degradation of damaged proteins. The sequence is that of Protein-L-isoaspartate O-methyltransferase from Chlorobium luteolum (strain DSM 273 / BCRC 81028 / 2530) (Pelodictyon luteolum).